The chain runs to 442 residues: tRNA modification GTPase MnmE (442 aa).

(6S)-5-formyl-5,6,7,8-tetrahydrofolate is bound by residues Arg27, Glu84, and Lys124. The TrmE-type G domain occupies 221–366 (GLHVVIVGAP…LLDALQAFAE (146 aa)). GTP contacts are provided by residues 231 to 236 (NAGKSS), 250 to 256 (SKEAGTT), and 275 to 278 (DTAG). Mg(2+)-binding residues include Ser235 and Thr256. A (6S)-5-formyl-5,6,7,8-tetrahydrofolate-binding site is contributed by Lys442.

This sequence belongs to the TRAFAC class TrmE-Era-EngA-EngB-Septin-like GTPase superfamily. TrmE GTPase family. As to quaternary structure, homodimer. Heterotetramer of two MnmE and two MnmG subunits. K(+) serves as cofactor.

The protein localises to the cytoplasm. Functionally, exhibits a very high intrinsic GTPase hydrolysis rate. Involved in the addition of a carboxymethylaminomethyl (cmnm) group at the wobble position (U34) of certain tRNAs, forming tRNA-cmnm(5)s(2)U34. The sequence is that of tRNA modification GTPase MnmE from Brucella canis (strain ATCC 23365 / NCTC 10854 / RM-666).